The primary structure comprises 91 residues: Small ribosomal subunit protein bS20 (91 aa).

The segment covering methionine 1 to asparagine 18 has biased composition (basic and acidic residues). The segment at methionine 1–lysine 25 is disordered.

It belongs to the bacterial ribosomal protein bS20 family.

Binds directly to 16S ribosomal RNA. The chain is Small ribosomal subunit protein bS20 from Chlorobium phaeovibrioides (strain DSM 265 / 1930) (Prosthecochloris vibrioformis (strain DSM 265)).